Consider the following 84-residue polypeptide: Acetylcholine receptor subunit alpha (84 aa).

2 disulfides stabilise this stretch: Cys7–Cys21 and Cys71–Cys72. Asn20 carries an N-linked (GlcNAc...) asparagine glycan.

The protein belongs to the ligand-gated ion channel (TC 1.A.9) family. Acetylcholine receptor (TC 1.A.9.1) subfamily. Alpha-1/CHRNA1 sub-subfamily. As to quaternary structure, one of the alpha chains that assemble within the acetylcholine receptor, a pentamer of two alpha chains, a beta, a delta, and a gamma (in immature muscle) or epsilon (in mature muscle) chains. The muscle heteropentamer composed of alpha-1, beta-1, delta, epsilon subunits interacts with the alpha-conotoxin ImII.

It localises to the postsynaptic cell membrane. Its subcellular location is the cell membrane. The catalysed reaction is K(+)(in) = K(+)(out). It carries out the reaction Na(+)(in) = Na(+)(out). Its function is as follows. Upon acetylcholine binding, the AChR responds by an extensive change in conformation that affects all subunits and leads to opening of an ion-conducting channel across the plasma membrane. The chain is Acetylcholine receptor subunit alpha (CHRNA1) from Crocidura russula (Greater white-toothed shrew).